Consider the following 333-residue polypeptide: Protoheme IX farnesyltransferase (333 aa).

A compositionally biased stretch (low complexity) spans 1 to 13 (MVSSTSQIISTSP). Positions 1 to 21 (MVSSTSQIISTSPSRDDVVPS) are disordered. 8 helical membrane passes run 38–58 (LIPL…GWPL), 63–83 (LACT…LNCL), 109–129 (AVFT…VSGV), 132–152 (LAAG…TAFL), 160–180 (IVIG…AATG), 188–208 (WLFA…AILL), 245–265 (CFGV…LVPF), and 286–306 (AKGL…LLVV).

Belongs to the UbiA prenyltransferase family. Protoheme IX farnesyltransferase subfamily.

Its subcellular location is the cell inner membrane. It catalyses the reaction heme b + (2E,6E)-farnesyl diphosphate + H2O = Fe(II)-heme o + diphosphate. It functions in the pathway porphyrin-containing compound metabolism; heme O biosynthesis; heme O from protoheme: step 1/1. Converts heme B (protoheme IX) to heme O by substitution of the vinyl group on carbon 2 of heme B porphyrin ring with a hydroxyethyl farnesyl side group. This chain is Protoheme IX farnesyltransferase, found in Prochlorococcus marinus (strain SARG / CCMP1375 / SS120).